Reading from the N-terminus, the 62-residue chain is Temporin-CDYb (62 aa).

Positions 1–22 are cleaved as a signal peptide; that stretch reads MFTLKKSLLLLFFLGTINLSLC. Positions 23–45 are excised as a propeptide; it reads EEERDADEEERRDDPEERAVQVE. Residue leucine 60 is modified to Leucine amide.

Belongs to the frog skin active peptide (FSAP) family. Temporin subfamily. As to expression, expressed by the skin glands.

It localises to the secreted. Functionally, antimicrobial peptide. Has low activity against the Gram-positive bacterium S.aureus (MIC&gt;100 uM) and the Gram-negative bacterium E.coli (MIC&gt;100 uM). Has weak hemolytic activity against human erythrocytes. The protein is Temporin-CDYb of Rana dybowskii (Dybovsky's frog).